A 176-amino-acid polypeptide reads, in one-letter code: Probable Brix domain-containing ribosomal biogenesis protein (176 aa).

The region spanning 6-176 (IEIVFTSSRD…QLYDRNKNIN (171 aa)) is the Brix domain.

Its function is as follows. Probably involved in the biogenesis of the ribosome. The polypeptide is Probable Brix domain-containing ribosomal biogenesis protein (Sulfurisphaera tokodaii (strain DSM 16993 / JCM 10545 / NBRC 100140 / 7) (Sulfolobus tokodaii)).